Here is a 211-residue protein sequence, read N- to C-terminus: Putative ATP-dependent Clp protease proteolytic subunit-like (211 aa).

Residues 1–24 form a disordered region; sequence MTRPSARHVLPEFTERTSAGTRTS. The active site involves His-129.

This sequence belongs to the peptidase S14 family.

Functionally, has lost one of the conserved residue (Ser) proposed to be part of the active site. Therefore it could be inactive. This chain is Putative ATP-dependent Clp protease proteolytic subunit-like, found in Streptomyces coelicolor (strain ATCC BAA-471 / A3(2) / M145).